Reading from the N-terminus, the 237-residue chain is Uridylate kinase (237 aa).

12–15 (KLSG) is an ATP binding site. Residue G53 coordinates UMP. Positions 54 and 58 each coordinate ATP. UMP-binding positions include D73 and 134-141 (TGNPYFTT). 3 residues coordinate ATP: T161, Y167, and D170.

It belongs to the UMP kinase family. In terms of assembly, homohexamer.

It localises to the cytoplasm. The enzyme catalyses UMP + ATP = UDP + ADP. Its pathway is pyrimidine metabolism; CTP biosynthesis via de novo pathway; UDP from UMP (UMPK route): step 1/1. Its activity is regulated as follows. Inhibited by UTP. Its function is as follows. Catalyzes the reversible phosphorylation of UMP to UDP. The polypeptide is Uridylate kinase (Rhizorhabdus wittichii (strain DSM 6014 / CCUG 31198 / JCM 15750 / NBRC 105917 / EY 4224 / RW1) (Sphingomonas wittichii)).